We begin with the raw amino-acid sequence, 1072 residues long: MSIGSHSFSPGGPNGIIRSQSFAGFSGLQERRSRCNSFIENTSALKKPQAKVKKMHNLGHKNSTTPKEPQPKRVEEVYRALKNGLDEYLEVHQTELDKLTAQLKDMRRNSRLGVLYDLDKQIKAVERYMRRLEFHISKVDELYEAYCIQRRLCDGASKMKQAFAMSPTSKAARESLTEINRSYKEYTENMCTIEAELENLLGEFCIKMKGLAGFARLCPGDQYEIFMRYGRQRWKLKGKIEVNGKQSWDGEEMVFLPLIVGLISIKVTEVKGLATHILVGSVTCETKDLFAARPQVVAVDINDLGTIKLNLEITWYPFDVEDLTPSTGNVSKASALQRRMSMYSQGTPETPTFKDHSFFRWLHPLQDRPRLAILDALQDTFFDKLRRSRSFSDLPSLRLSPKAGLELYSNLPDDVFENGTATTEKRPLSFTFGDLPYEDRVPPANSAEPSSAHVTSSPDIATTATQHRARAQTAAAVTPAEGKACPGVRCEPRGHGDSCQEYPPGFQKPSDTGSDRVFIEANVPVSLLQDTDEGSELKPVELDTYEGNITKQLVKRLTSAEVPGTPERLPCEGSISGESEGYKSYLDGSIEEALQGLLLALEPHKEQYKEFQDLDQEVMHLDDILKCKPAVSRSRSSSLSLTVESALESFDFLNTSDFDDEDGGGEEVCNGGGGADSVFSDTEVEKNSYRTEHPEARGHLQRSLTEDTGVGTSVAGSPLPLTTGSDSLDITIVKHLQYCTQLIQQIVFSRKTPFVTRDLLDKLSRQTLVMENIAEISTENLGSITSLTDAIPEFHKKLSLLAFWMKCTGPSGVYHTSADKMMKQLDINFAATVNEECPGLAETVFRILVSQILDRTEPVLYSTMSSEIITVFQYYNYFASHSVNDLGSYLLQLAKEASVVQMLQSVKDGKLQQNVSKINSNNLPPQQEVLRALALLLNENKNEVSETVASLLTATAENKHFREKALIYYCEALTQPNLQLQKAACLALRYLKATESIKMLVMLCQSDNEEIRKVASETLLSLGEDGRLAYEQLDNSPGNLSELEVAGELNLPQLSRRTCLSVTATEEGWSCH.

Residues 83–112 adopt a coiled-coil conformation; it reads NGLDEYLEVHQTELDKLTAQLKDMRRNSRL. The tract at residues 173–470 is necessary for interaction with NCAM and myoblast protrusion formation; it reads RESLTEINRS…ATTATQHRAR (298 aa). Disordered regions lie at residues 439–465 and 683–718; these read DRVP…TTAT and EVEK…AGSP. Residues 447–460 show a composition bias toward polar residues; the sequence is AEPSSAHVTSSPDI. A compositionally biased stretch (basic and acidic residues) spans 683-698; it reads EVEKNSYRTEHPEARG.

It belongs to the RIPOR family. In terms of assembly, homooligomer; homooligomerization is regulated by RHOC and leads to the formation of concatemers through the association of N- and C-termini. Interacts with NCAM; this interaction is necessary for myoblast protrusion formation. In terms of tissue distribution, expressed in myoblast and myotubes (at protein level). Expressed in brain, eyes and skeletal muscle.

It is found in the cytoplasm. It localises to the cytoskeleton. The protein localises to the cell projection. The protein resides in the filopodium. Its subcellular location is the apical cell membrane. It is found in the stereocilium. It localises to the stereocilium membrane. Acts as an inhibitor of the small GTPase RHOA and plays several roles in the regulation of myoblast and hair cell differentiation, lymphocyte T proliferation and neutrophil polarization. Plays a role in fetal mononuclear myoblast differentiation by promoting filopodia and myotube formation. Maintains naive T lymphocytes in a quiescent state and prevents chemokine-induced T lymphocyte responses, such as cell adhesion, polarization and migration. Involved also in the regulation of neutrophil polarization, chemotaxis and adhesion. Required for normal development of inner and outer hair cell stereocilia within the cochlea of the inner ear. Plays a role for maintaining the structural organization of the basal domain of stereocilia. Involved in mechanosensory hair cell function. Required for normal hearing. This is Rho family-interacting cell polarization regulator 2 from Coturnix japonica (Japanese quail).